The primary structure comprises 100 residues: Large ribosomal subunit protein uL23 (100 aa).

Belongs to the universal ribosomal protein uL23 family. As to quaternary structure, part of the 50S ribosomal subunit. Contacts protein L29, and trigger factor when it is bound to the ribosome.

Functionally, one of the early assembly proteins it binds 23S rRNA. One of the proteins that surrounds the polypeptide exit tunnel on the outside of the ribosome. Forms the main docking site for trigger factor binding to the ribosome. In Mycobacterium tuberculosis (strain ATCC 25177 / H37Ra), this protein is Large ribosomal subunit protein uL23.